The sequence spans 130 residues: Large ribosomal subunit protein bL19 (130 aa).

It belongs to the bacterial ribosomal protein bL19 family.

This protein is located at the 30S-50S ribosomal subunit interface and may play a role in the structure and function of the aminoacyl-tRNA binding site. The sequence is that of Large ribosomal subunit protein bL19 from Mycoplasma capricolum subsp. capricolum (strain California kid / ATCC 27343 / NCTC 10154).